The sequence spans 110 residues: MSETRAVLRGVRLSVDKGRLVADLIRGKKVDQALNILTFTQKKAAVIVKKVLESAIANAEHNDGADIDELKVKTIYVEQGTTLKRFTARAKGRGNRISKPTCHVYVTVGN.

It belongs to the universal ribosomal protein uL22 family. In terms of assembly, part of the 50S ribosomal subunit.

This protein binds specifically to 23S rRNA; its binding is stimulated by other ribosomal proteins, e.g. L4, L17, and L20. It is important during the early stages of 50S assembly. It makes multiple contacts with different domains of the 23S rRNA in the assembled 50S subunit and ribosome. Its function is as follows. The globular domain of the protein is located near the polypeptide exit tunnel on the outside of the subunit, while an extended beta-hairpin is found that lines the wall of the exit tunnel in the center of the 70S ribosome. In Paracidovorax citrulli (strain AAC00-1) (Acidovorax citrulli), this protein is Large ribosomal subunit protein uL22.